A 202-amino-acid polypeptide reads, in one-letter code: Ribosome maturation factor RimM (202 aa).

A PRC barrel domain is found at 121–202; sequence ADEYYWVDLI…CITVDWQPDY (82 aa).

This sequence belongs to the RimM family. Binds ribosomal protein uS19.

The protein resides in the cytoplasm. An accessory protein needed during the final step in the assembly of 30S ribosomal subunit, possibly for assembly of the head region. Essential for efficient processing of 16S rRNA. May be needed both before and after RbfA during the maturation of 16S rRNA. It has affinity for free ribosomal 30S subunits but not for 70S ribosomes. The protein is Ribosome maturation factor RimM of Polaromonas naphthalenivorans (strain CJ2).